A 358-amino-acid chain; its full sequence is Cyclin-D1-binding protein 1 (358 aa).

2 interaction with TCF3 regions span residues 1-183 and 149-358; these read MESA…VDLV and ISYN…EVES. Interaction with RPLP0 stretches follow at residues 1-189 and 238-358; these read MESA…AHEE and LIIP…EVES. A required for interaction with CCND1 region spans residues 1 to 207; the sequence is MESAAVSAAP…DPYCGLLNDI (207 aa).

It belongs to the CCNDBP1 family. As to quaternary structure, interacts with CCND1 and GRAP2. May also interact with COPS5, RPLP0, SIRT6, SYF2 and TCF3. In terms of processing, phosphorylated.

It localises to the cytoplasm. Its subcellular location is the nucleus. Functionally, may negatively regulate cell cycle progression. May act at least in part via inhibition of the cyclin-D1/CDK4 complex, thereby preventing phosphorylation of RB1 and blocking E2F-dependent transcription. This is Cyclin-D1-binding protein 1 (CCNDBP1) from Bos taurus (Bovine).